The following is an 89-amino-acid chain: Small ribosomal subunit protein uS15 (89 aa).

This sequence belongs to the universal ribosomal protein uS15 family. Part of the 30S ribosomal subunit. Forms a bridge to the 50S subunit in the 70S ribosome, contacting the 23S rRNA.

Its function is as follows. One of the primary rRNA binding proteins, it binds directly to 16S rRNA where it helps nucleate assembly of the platform of the 30S subunit by binding and bridging several RNA helices of the 16S rRNA. Functionally, forms an intersubunit bridge (bridge B4) with the 23S rRNA of the 50S subunit in the ribosome. This Shewanella piezotolerans (strain WP3 / JCM 13877) protein is Small ribosomal subunit protein uS15.